The primary structure comprises 426 residues: Protein trichome birefringence-like 19 (426 aa).

A helical; Signal-anchor for type II membrane protein membrane pass occupies residues L15 to L35. The GDS motif motif lies at G142 to S144. The DCXHWCLPGXXDXWN motif motif lies at D388–N402.

The protein belongs to the PC-esterase family. TBL subfamily.

The protein resides in the membrane. In terms of biological role, may act as a bridging protein that binds pectin and other cell wall polysaccharides. Probably involved in maintaining esterification of pectins. May be involved in the specific O-acetylation of cell wall polymers. The chain is Protein trichome birefringence-like 19 (TBL19) from Arabidopsis thaliana (Mouse-ear cress).